Here is a 466-residue protein sequence, read N- to C-terminus: Methylenetetrahydrofolate--tRNA-(uracil-5-)-methyltransferase TrmFO (466 aa).

Position 14 to 19 (14 to 19 (GGGLAG)) interacts with FAD.

This sequence belongs to the MnmG family. TrmFO subfamily. FAD serves as cofactor.

It is found in the cytoplasm. The catalysed reaction is uridine(54) in tRNA + (6R)-5,10-methylene-5,6,7,8-tetrahydrofolate + NADH + H(+) = 5-methyluridine(54) in tRNA + (6S)-5,6,7,8-tetrahydrofolate + NAD(+). It carries out the reaction uridine(54) in tRNA + (6R)-5,10-methylene-5,6,7,8-tetrahydrofolate + NADPH + H(+) = 5-methyluridine(54) in tRNA + (6S)-5,6,7,8-tetrahydrofolate + NADP(+). Its function is as follows. Catalyzes the folate-dependent formation of 5-methyl-uridine at position 54 (M-5-U54) in all tRNAs. The chain is Methylenetetrahydrofolate--tRNA-(uracil-5-)-methyltransferase TrmFO from Brucella melitensis biotype 1 (strain ATCC 23456 / CCUG 17765 / NCTC 10094 / 16M).